The chain runs to 583 residues: Phosphoglucomutase, cytoplasmic (583 aa).

A disordered region spans residues 1–20; it reads MANFKVSRVETTPFEGQKPG. Residues R25 and S124 each coordinate alpha-D-glucose 1,6-bisphosphate. The active-site Phosphoserine intermediate is S124. S124, D300, D302, and D304 together coordinate Mg(2+). The residue at position 124 (S124) is a Phosphoserine. Residues D304, R305, T368, E387, S389, and K400 each contribute to the alpha-D-glucose 1,6-bisphosphate site.

Belongs to the phosphohexose mutase family. As to quaternary structure, monomer. Requires Mg(2+) as cofactor.

It localises to the cytoplasm. The enzyme catalyses alpha-D-glucose 1-phosphate = alpha-D-glucose 6-phosphate. The catalysed reaction is O-phospho-L-seryl-[protein] + alpha-D-glucose 1-phosphate = alpha-D-glucose 1,6-bisphosphate + L-seryl-[protein]. It catalyses the reaction alpha-D-glucose 1,6-bisphosphate + L-seryl-[protein] = O-phospho-L-seryl-[protein] + alpha-D-glucose 6-phosphate. Catalyzes the reversible isomerization of alpha-D-glucose 1-phosphate to alpha-D-glucose 6-phosphate. The mechanism proceeds via the intermediate compound alpha-D-glucose 1,6-bisphosphate. This enzyme participates in both the breakdown and synthesis of glucose. The sequence is that of Phosphoglucomutase, cytoplasmic (PGM1) from Solanum tuberosum (Potato).